A 447-amino-acid chain; its full sequence is Innexin-5 (447 aa).

4 helical membrane passes run 30–47, 108–128, 198–218, and 283–303; these read TSTLLGFSAIMMAASQYV, QWIPIVLVLQAFLFYLPSIIW, ALYLLVKILYLANIVLQFWIL, and VYVFFWFWLLFVGLLTVCSLA. The segment at 389 to 447 is disordered; it reads KKDDDSALPASAPVDLQEDDDDDTPFPPPTKAVAETLTSDDEEEETDVDSPDTTATLPR. A compositionally biased stretch (acidic residues) spans 426 to 438; the sequence is TSDDEEEETDVDS.

The protein belongs to the pannexin family.

It is found in the cell membrane. The protein resides in the cell junction. It localises to the gap junction. Structural component of the gap junctions. In Caenorhabditis elegans, this protein is Innexin-5 (inx-5).